The sequence spans 594 residues: Putative diflavin flavoprotein A 4 (594 aa).

The segment at 57-250 (RRGTTSNSYL…LTLKMIAPGH (194 aa)) is zinc metallo-hydrolase. The region spanning 279–417 (VALIYASAYG…VCTTSGANFA (139 aa)) is the Flavodoxin-like domain. Positions 445–594 (VGRIIGSIGV…IRHRKSGGQY (150 aa)) are flavodoxin-reductase-like.

This sequence in the N-terminal section; belongs to the zinc metallo-hydrolase group 3 family. The protein in the C-terminal section; belongs to the flavodoxin reductase family. Fe cation serves as cofactor.

Its function is as follows. Mediates electron transfer from NADH to oxygen, reducing it to water. This modular protein has 3 redox cofactors, in other organisms the same activity requires 2 or 3 proteins. This chain is Putative diflavin flavoprotein A 4 (dfa4), found in Synechocystis sp. (strain ATCC 27184 / PCC 6803 / Kazusa).